A 724-amino-acid chain; its full sequence is Phosphoribosylformylglycinamidine synthase subunit PurL (724 aa).

Residue His-34 is part of the active site. Tyr-37 serves as a coordination point for ATP. Position 78 (Glu-78) interacts with Mg(2+). Substrate contacts are provided by residues 79 to 82 and Arg-101; that span reads SHNH. The Proton acceptor role is filled by His-80. Asp-102 lines the Mg(2+) pocket. Residue Gln-226 participates in substrate binding. Mg(2+) is bound at residue Asp-254. 298–300 lines the substrate pocket; it reads ESQ. ATP-binding residues include Asp-480 and Gly-517. Asn-518 is a Mg(2+) binding site. Residue Ser-520 participates in substrate binding.

This sequence belongs to the FGAMS family. Monomer. Part of the FGAM synthase complex composed of 1 PurL, 1 PurQ and 2 PurS subunits.

It localises to the cytoplasm. The enzyme catalyses N(2)-formyl-N(1)-(5-phospho-beta-D-ribosyl)glycinamide + L-glutamine + ATP + H2O = 2-formamido-N(1)-(5-O-phospho-beta-D-ribosyl)acetamidine + L-glutamate + ADP + phosphate + H(+). Its pathway is purine metabolism; IMP biosynthesis via de novo pathway; 5-amino-1-(5-phospho-D-ribosyl)imidazole from N(2)-formyl-N(1)-(5-phospho-D-ribosyl)glycinamide: step 1/2. In terms of biological role, part of the phosphoribosylformylglycinamidine synthase complex involved in the purines biosynthetic pathway. Catalyzes the ATP-dependent conversion of formylglycinamide ribonucleotide (FGAR) and glutamine to yield formylglycinamidine ribonucleotide (FGAM) and glutamate. The FGAM synthase complex is composed of three subunits. PurQ produces an ammonia molecule by converting glutamine to glutamate. PurL transfers the ammonia molecule to FGAR to form FGAM in an ATP-dependent manner. PurS interacts with PurQ and PurL and is thought to assist in the transfer of the ammonia molecule from PurQ to PurL. The polypeptide is Phosphoribosylformylglycinamidine synthase subunit PurL (Methanopyrus kandleri (strain AV19 / DSM 6324 / JCM 9639 / NBRC 100938)).